Reading from the N-terminus, the 231-residue chain is Sugar fermentation stimulation protein homolog (231 aa).

The protein belongs to the SfsA family.

The sequence is that of Sugar fermentation stimulation protein homolog from Geotalea daltonii (strain DSM 22248 / JCM 15807 / FRC-32) (Geobacter daltonii).